Reading from the N-terminus, the 180-residue chain is Nucleoside triphosphate/diphosphate phosphatase (180 aa).

Catalysis depends on arginine 26, which acts as the Proton donor. Residues asparagine 90, aspartate 106, aspartate 108, aspartate 110, aspartate 123, and glutamate 126 each coordinate Mg(2+).

The protein belongs to the Ntdp family. Requires Mg(2+) as cofactor.

It catalyses the reaction a ribonucleoside 5'-triphosphate + H2O = a ribonucleoside 5'-diphosphate + phosphate + H(+). It carries out the reaction a ribonucleoside 5'-diphosphate + H2O = a ribonucleoside 5'-phosphate + phosphate + H(+). Its function is as follows. Has nucleoside phosphatase activity towards nucleoside triphosphates and nucleoside diphosphates. The sequence is that of Nucleoside triphosphate/diphosphate phosphatase from Staphylococcus aureus (strain MRSA252).